The following is an 877-amino-acid chain: Alanine--tRNA ligase (877 aa).

The Zn(2+) site is built by His567, His571, Cys669, and His673.

It belongs to the class-II aminoacyl-tRNA synthetase family. It depends on Zn(2+) as a cofactor.

The protein localises to the cytoplasm. It carries out the reaction tRNA(Ala) + L-alanine + ATP = L-alanyl-tRNA(Ala) + AMP + diphosphate. In terms of biological role, catalyzes the attachment of alanine to tRNA(Ala) in a two-step reaction: alanine is first activated by ATP to form Ala-AMP and then transferred to the acceptor end of tRNA(Ala). Also edits incorrectly charged Ser-tRNA(Ala) and Gly-tRNA(Ala) via its editing domain. In Lactobacillus delbrueckii subsp. bulgaricus (strain ATCC 11842 / DSM 20081 / BCRC 10696 / JCM 1002 / NBRC 13953 / NCIMB 11778 / NCTC 12712 / WDCM 00102 / Lb 14), this protein is Alanine--tRNA ligase.